The chain runs to 966 residues: Insulin-degrading enzyme-like 2 (966 aa).

His71 lines the Zn(2+) pocket. The active-site Proton acceptor is the Glu74. His75 contacts Zn(2+). The active site involves Glu145. Glu152 is a binding site for Zn(2+).

Belongs to the peptidase M16 family. Zn(2+) serves as cofactor.

This chain is Insulin-degrading enzyme-like 2, found in Arabidopsis thaliana (Mouse-ear cress).